We begin with the raw amino-acid sequence, 297 residues long: 3-methyl-2-oxobutanoate hydroxymethyltransferase (297 aa).

Polar residues predominate over residues 1-12; it reads MSEQISEQSEQN. Positions 1-36 are disordered; sequence MSEQISEQSEQNVYGACPPVPAGESSPSAASAPRTK. Positions 22 to 33 are enriched in low complexity; sequence AGESSPSAASAP. Residues Asp78 and Asp117 each coordinate Mg(2+). 3-methyl-2-oxobutanoate is bound by residues 78-79, Asp117, and Lys147; that span reads DS. Residue Glu149 participates in Mg(2+) binding. Glu215 acts as the Proton acceptor in catalysis.

The protein belongs to the PanB family. In terms of assembly, homodecamer; pentamer of dimers. The cofactor is Mg(2+).

Its subcellular location is the cytoplasm. The catalysed reaction is 3-methyl-2-oxobutanoate + (6R)-5,10-methylene-5,6,7,8-tetrahydrofolate + H2O = 2-dehydropantoate + (6S)-5,6,7,8-tetrahydrofolate. It functions in the pathway cofactor biosynthesis; (R)-pantothenate biosynthesis; (R)-pantoate from 3-methyl-2-oxobutanoate: step 1/2. Functionally, catalyzes the reversible reaction in which hydroxymethyl group from 5,10-methylenetetrahydrofolate is transferred onto alpha-ketoisovalerate to form ketopantoate. This chain is 3-methyl-2-oxobutanoate hydroxymethyltransferase, found in Mycobacterium ulcerans (strain Agy99).